The sequence spans 130 residues: Small ribosomal subunit protein uS11 (130 aa).

Belongs to the universal ribosomal protein uS11 family. In terms of assembly, part of the 30S ribosomal subunit. Interacts with proteins S7 and S18. Binds to IF-3.

Functionally, located on the platform of the 30S subunit, it bridges several disparate RNA helices of the 16S rRNA. Forms part of the Shine-Dalgarno cleft in the 70S ribosome. The polypeptide is Small ribosomal subunit protein uS11 (Shewanella denitrificans (strain OS217 / ATCC BAA-1090 / DSM 15013)).